Consider the following 341-residue polypeptide: ATP-dependent 6-phosphofructokinase 3 (341 aa).

ATP is bound by residues glycine 10, arginine 72–valine 73, and glycine 102–threonine 105. A Mg(2+)-binding site is contributed by glutamate 103. Substrate-binding positions include threonine 125 to aspartate 127, arginine 162, methionine 169 to arginine 171, glutamate 222, arginine 266, and histidine 272 to arginine 275. The Proton acceptor role is filled by aspartate 127.

It belongs to the phosphofructokinase type A (PFKA) family. Mixed-substrate PFK group III subfamily. Homodimer or homotetramer. The cofactor is Mg(2+).

Its subcellular location is the cytoplasm. It catalyses the reaction beta-D-fructose 6-phosphate + ATP = beta-D-fructose 1,6-bisphosphate + ADP + H(+). It functions in the pathway carbohydrate degradation; glycolysis; D-glyceraldehyde 3-phosphate and glycerone phosphate from D-glucose: step 3/4. In terms of biological role, catalyzes the phosphorylation of D-fructose 6-phosphate to fructose 1,6-bisphosphate by ATP, the first committing step of glycolysis. This chain is ATP-dependent 6-phosphofructokinase 3, found in Streptomyces coelicolor (strain ATCC BAA-471 / A3(2) / M145).